The primary structure comprises 331 residues: Beta-ketoacyl-[acyl-carrier-protein] synthase III (331 aa).

Active-site residues include cysteine 115 and histidine 255. The interval 256 to 260 (QANFR) is ACP-binding. Residue asparagine 285 is part of the active site.

Belongs to the thiolase-like superfamily. FabH family. In terms of assembly, homodimer.

Its subcellular location is the cytoplasm. The catalysed reaction is malonyl-[ACP] + acetyl-CoA + H(+) = 3-oxobutanoyl-[ACP] + CO2 + CoA. Its pathway is lipid metabolism; fatty acid biosynthesis. Functionally, catalyzes the condensation reaction of fatty acid synthesis by the addition to an acyl acceptor of two carbons from malonyl-ACP. Catalyzes the first condensation reaction which initiates fatty acid synthesis and may therefore play a role in governing the total rate of fatty acid production. Possesses both acetoacetyl-ACP synthase and acetyl transacylase activities. Its substrate specificity determines the biosynthesis of branched-chain and/or straight-chain of fatty acids. The polypeptide is Beta-ketoacyl-[acyl-carrier-protein] synthase III (Helicobacter pylori (strain ATCC 700392 / 26695) (Campylobacter pylori)).